A 349-amino-acid chain; its full sequence is uncharacterized protein (349 aa).

Positions 1-29 are cleaved as a signal peptide; sequence MKQKYENYFKKRLILNLLIFLLLACSSES.

This is an uncharacterized protein from Borreliella burgdorferi (strain ATCC 35210 / DSM 4680 / CIP 102532 / B31) (Borrelia burgdorferi).